A 111-amino-acid polypeptide reads, in one-letter code: Small ribosomal subunit protein bS18 (111 aa).

The disordered stretch occupies residues 1-32 (MDLENTENVENNNNNEEEVKAKGERKAHFNKE). Residues 17-32 (EEVKAKGERKAHFNKE) are compositionally biased toward basic and acidic residues.

It belongs to the bacterial ribosomal protein bS18 family. As to quaternary structure, part of the 30S ribosomal subunit. Forms a tight heterodimer with protein bS6.

Its function is as follows. Binds as a heterodimer with protein bS6 to the central domain of the 16S rRNA, where it helps stabilize the platform of the 30S subunit. The sequence is that of Small ribosomal subunit protein bS18 from Brachyspira hyodysenteriae (strain ATCC 49526 / WA1).